We begin with the raw amino-acid sequence, 20 residues long: uncharacterized protein (20 aa).

This is an uncharacterized protein from Serratia marcescens.